The primary structure comprises 810 residues: MPHITHSEFLLEQLKRQRERSFLCDCTVSIGQAQYRAHHNVLAAFSEYFSTQSVDAGREDPTITLDPESVSSAIFEKLLTYIYTGDLNMDREEIESVQKAASYLGMPEVVARCTLSQDNIKNVGSPMRQAEYEDPRSPLSPDDYEPLEPISEVEERELLREDRAGDDLVSMDEAQSSSEQTPQRVGKRGRKPKTRLYEDEFEVETISAQRGRGRGRGRPRGRPRVRPLSSDSTDQSPAHQAMSPNGSSTSRGSGRPRGRPRVRPLSTANEDPRNVEDDPAANKDQEVEKGNEEQKKETGEKDDGKNDTDNPEEVTAFKRGRGRPRIKPVSTEDQTTNSENVTTNAEDGSEPAKTKDSEGTGRKRGRPRSKPVSSEDPESVISVEISGEEAGEETSQDAEKHTEEGTEDSESNPGNSVRISKRKRILSRKLKESQAGDEEEEEEEEMDDEFENDNEDWAGEEEVKPVQDKHRPICNICGNLFSEMSSLRRHMRIHKGLKPYQCTLCTRSFRQGNQLKTHMRIHTGEKPFTCTSCDSRFAQKCQLVYHCRMHHGEEKPYKCEFCGAAFATSSNLKIHIRKHSGEKPYECGECGKRFTQASTLMYHKRRHTGEKPYICDTCGMAFAVSSSLIAHNRKHTGVTPYICLDCGKPCLTAGELRKHMDVHNDIYSLKKHSILKHNVVPELETTQTSKTDPTQCPLNIPIDHQGLIARVRSALVDSQDHEIQMEPPLPILPPETSLTIQQSAEPQMIIQHADGSEPSMIFQHAEASEAPMLIQHGEPGEQVSYVVEQYEIPATAEMEHTQIVIVQTID.

The BTB domain maps to 24-91 (CDCTVSIGQA…IYTGDLNMDR (68 aa)). 2 disordered regions span residues 122–146 (NVGS…DYEP) and 169–466 (VSMD…VKPV). Residues 173–183 (EAQSSSEQTPQ) are compositionally biased toward polar residues. Composition is skewed to basic residues over residues 185–194 (VGKRGRKPKT) and 211–225 (GRGR…RPRV). Positions 229–238 (SSDSTDQSPA) are enriched in polar residues. Positions 243–253 (SPNGSSTSRGS) are enriched in low complexity. Residues 254–266 (GRPRGRPRVRPLS) constitute a DNA-binding region (a.T hook 1). The span at 270-308 (EDPRNVEDDPAANKDQEVEKGNEEQKKETGEKDDGKNDT) shows a compositional bias: basic and acidic residues. The a.T hook 2 DNA-binding region spans 318 to 330 (KRGRGRPRIKPVS). Polar residues predominate over residues 331 to 346 (TEDQTTNSENVTTNAE). Basic and acidic residues predominate over residues 350–361 (EPAKTKDSEGTG). The segment at residues 361–373 (GRKRGRPRSKPVS) is a DNA-binding region (a.T hook 3). The span at 386–396 (SGEEAGEETSQ) shows a compositional bias: acidic residues. The segment covering 419 to 428 (ISKRKRILSR) has biased composition (basic residues). Residues 428-432 (RKLKE) carry the Nuclear localization signal motif. Residues 435–460 (AGDEEEEEEEEMDDEFENDNEDWAGE) show a composition bias toward acidic residues. 7 C2H2-type zinc fingers span residues 472 to 494 (PICN…MRIH), 500 to 522 (YQCT…MRIH), 528 to 551 (FTCT…RMHH), 557 to 579 (YKCE…IRKH), 585 to 607 (YECG…KRRH), 613 to 635 (YICD…NRKH), and 641 to 663 (YICL…MDVH).

This sequence belongs to the krueppel C2H2-type zinc-finger protein family.

The protein resides in the nucleus. The chain is Myoneurin (mynn) from Danio rerio (Zebrafish).